Reading from the N-terminus, the 449-residue chain is Glycerol-3-phosphate acyltransferase 3 (449 aa).

Transmembrane regions (helical) follow at residues 9-29, 146-166, and 170-190; these read FVLL…PAMF, ISVR…CVLL, and ITLA…VGFL. Positions 238–243 match the HXXXXD motif motif; the sequence is HTSPID. Residues 358–378 traverse the membrane as a helical segment; sequence MVSYILRMMTSWAIVCNVWYL.

Belongs to the 1-acyl-sn-glycerol-3-phosphate acyltransferase family.

It localises to the endoplasmic reticulum membrane. The enzyme catalyses sn-glycerol 3-phosphate + an acyl-CoA = a 1-acyl-sn-glycero-3-phosphate + CoA. It carries out the reaction a 1-acyl-sn-glycero-3-phosphate + an acyl-CoA = a 1,2-diacyl-sn-glycero-3-phosphate + CoA. It catalyses the reaction dodecanoyl-CoA + sn-glycerol 3-phosphate = 1-dodecanoyl-sn-glycerol 3-phosphate + CoA. The catalysed reaction is sn-glycerol 3-phosphate + hexadecanoyl-CoA = 1-hexadecanoyl-sn-glycero-3-phosphate + CoA. The enzyme catalyses sn-glycerol 3-phosphate + (9Z)-octadecenoyl-CoA = 1-(9Z-octadecenoyl)-sn-glycero-3-phosphate + CoA. It carries out the reaction (9Z,12Z)-octadecadienoyl-CoA + sn-glycerol 3-phosphate = 1-(9Z,12Z)-octadecadienoyl-sn-glycero-3-phosphate + CoA. It catalyses the reaction 1-tetradecanoyl-sn-glycerol 3-phosphate + (9Z)-octadecenoyl-CoA = 1-tetradecanoyl-2-(9Z)-octadecenoyl-sn-glycero-3-phosphate + CoA. The catalysed reaction is 1-hexadecanoyl-sn-glycero-3-phosphate + (9Z)-octadecenoyl-CoA = 1-hexadecanoyl-2-(9Z-octadecenoyl)-sn-glycero-3-phosphate + CoA. The enzyme catalyses 1-(9Z-octadecenoyl)-sn-glycero-3-phosphate + (9Z)-octadecenoyl-CoA = 1,2-di-(9Z-octadecenoyl)-sn-glycero-3-phosphate + CoA. It carries out the reaction 1-(6Z,9Z,12Z-octadecatrienoyl)-sn-glycero-3-phosphate + (9Z)-octadecenoyl-CoA = (6Z,9Z,12Z)-octadecatrienoyl-2-(9Z)-octadecenoyl-sn-glycero-3-phosphate + CoA. It catalyses the reaction 1-(9Z,12Z,15Z)-octadecatrienoyl-sn-glycero-3-phosphate + (9Z)-octadecenoyl-CoA = 1-(9Z,12Z,15Z)-octadecatrienoyl-2-(9Z)-octadecenoyl-sn-glycero-3-phosphate + CoA. The catalysed reaction is 1-(9Z-octadecenoyl)-sn-glycero-3-phosphate + tetradecanoyl-CoA = 1-(9Z)-octadecenoyl-2-tetradecanoyl-sn-glycero-3-phosphate + CoA. The enzyme catalyses 1-(9Z-octadecenoyl)-sn-glycero-3-phosphate + hexadecanoyl-CoA = 1-(9Z)-octadecenoyl-2-hexadecanoyl-sn-glycero-3-phosphate + CoA. It carries out the reaction 1-(9Z-octadecenoyl)-sn-glycero-3-phosphate + octadecanoyl-CoA = 1-(9Z-octadecenoyl)-2-octadecanoyl-sn-glycero-3-phosphate + CoA. It catalyses the reaction 1-(9Z-octadecenoyl)-sn-glycero-3-phosphate + (9Z,12Z)-octadecadienoyl-CoA = 1-(9Z)-octadecenoyl-2-(9Z,12Z)-octadecadienoyl-sn-glycero-3-phosphate + CoA. The catalysed reaction is 1-(5Z,8Z,11Z,14Z-eicosatetraenoyl)-sn-glycero-3-phosphate + (9Z)-octadecenoyl-CoA = 1-(5Z,8Z,11Z,14Z)-eicosatetraenoyl-2-(9Z)-octadecenoyl-sn-glycero-3-phosphate + CoA. Its pathway is glycerolipid metabolism; triacylglycerol biosynthesis. The protein operates within phospholipid metabolism; CDP-diacylglycerol biosynthesis; CDP-diacylglycerol from sn-glycerol 3-phosphate: step 1/3. In terms of biological role, converts glycerol-3-phosphate to 1-acyl-sn-glycerol-3-phosphate (lysophosphatidic acid or LPA) by incorporating an acyl moiety at the sn-1 position of the glycerol backbone. Also converts LPA into 1,2-diacyl-sn-glycerol-3-phosphate (phosphatidic acid or PA) by incorporating an acyl moiety at the sn-2 position of the glycerol backbone. Protects cells against lipotoxicity. The chain is Glycerol-3-phosphate acyltransferase 3 from Danio rerio (Zebrafish).